Consider the following 229-residue polypeptide: Large ribosomal subunit protein uL1 (229 aa).

Belongs to the universal ribosomal protein uL1 family. As to quaternary structure, part of the 50S ribosomal subunit.

In terms of biological role, binds directly to 23S rRNA. The L1 stalk is quite mobile in the ribosome, and is involved in E site tRNA release. Functionally, protein L1 is also a translational repressor protein, it controls the translation of the L11 operon by binding to its mRNA. This chain is Large ribosomal subunit protein uL1, found in Rhodopseudomonas palustris (strain BisB5).